Here is a 226-residue protein sequence, read N- to C-terminus: 2-C-methyl-D-erythritol 4-phosphate cytidylyltransferase (226 aa).

The protein belongs to the IspD/TarI cytidylyltransferase family. IspD subfamily.

The catalysed reaction is 2-C-methyl-D-erythritol 4-phosphate + CTP + H(+) = 4-CDP-2-C-methyl-D-erythritol + diphosphate. The protein operates within isoprenoid biosynthesis; isopentenyl diphosphate biosynthesis via DXP pathway; isopentenyl diphosphate from 1-deoxy-D-xylulose 5-phosphate: step 2/6. Functionally, catalyzes the formation of 4-diphosphocytidyl-2-C-methyl-D-erythritol from CTP and 2-C-methyl-D-erythritol 4-phosphate (MEP). The chain is 2-C-methyl-D-erythritol 4-phosphate cytidylyltransferase from Rhodococcus opacus (strain B4).